Here is a 211-residue protein sequence, read N- to C-terminus: Thymidylate kinase (211 aa).

Gly10–Ser17 serves as a coordination point for ATP.

The protein belongs to the thymidylate kinase family.

It carries out the reaction dTMP + ATP = dTDP + ADP. Functionally, phosphorylation of dTMP to form dTDP in both de novo and salvage pathways of dTTP synthesis. This is Thymidylate kinase from Clavibacter sepedonicus (Clavibacter michiganensis subsp. sepedonicus).